We begin with the raw amino-acid sequence, 206 residues long: Thymidylate kinase (206 aa).

10 to 17 lines the ATP pocket; sequence GIDGAGKS.

It belongs to the thymidylate kinase family.

The enzyme catalyses dTMP + ATP = dTDP + ADP. Phosphorylation of dTMP to form dTDP in both de novo and salvage pathways of dTTP synthesis. This chain is Thymidylate kinase, found in Neisseria meningitidis serogroup C / serotype 2a (strain ATCC 700532 / DSM 15464 / FAM18).